A 149-amino-acid chain; its full sequence is ER export of PMA1 protein 1 (149 aa).

Residues 1 to 6 lie on the Lumenal side of the membrane; it reads MNLYGY. Residues 7-27 form a helical; Signal-anchor for type II membrane protein membrane-spanning segment; the sequence is FLLLIIVIAFIALLPLFSGIG. Residues 28-149 are Cytoplasmic-facing; the sequence is TFKLTKPKSS…KKNEAYEGFV (122 aa).

As to quaternary structure, interacts with PMA1 and PSG1.

Its subcellular location is the endoplasmic reticulum membrane. It is found in the cytoplasmic vesicle. The protein localises to the COPI-coated vesicle membrane. The protein resides in the COPII-coated vesicle membrane. It localises to the golgi apparatus membrane. Functionally, specific cargo receptor protein for the plasma membrane ATPase PMA1 that acts with PSG1 to promote the transport and maturation of PMA1. EXP1 and PSG1 probably act sequentially to promote PMA1 sorting between the ER and the Golgi, with EXP1 promoting PMA1 export from the ER to the Golgi while PSG1 has a role in PMA1 maturation or quality control in the Golgi. The chain is ER export of PMA1 protein 1 from Saccharomyces cerevisiae (strain ATCC 204508 / S288c) (Baker's yeast).